Consider the following 454-residue polypeptide: tRNA modification GTPase MnmE (454 aa).

R23, E80, and K120 together coordinate (6S)-5-formyl-5,6,7,8-tetrahydrofolate. The TrmE-type G domain occupies 216–377 (GMKVVIAGRP…LRNHLKQSMG (162 aa)). N226 provides a ligand contact to K(+). GTP-binding positions include 226 to 231 (NAGKSS), 245 to 251 (TDIAGTT), 270 to 273 (DTAG), 335 to 338 (NKAD), and 358 to 360 (SAR). Position 230 (S230) interacts with Mg(2+). The K(+) site is built by T245, I247, and T250. A Mg(2+)-binding site is contributed by T251. (6S)-5-formyl-5,6,7,8-tetrahydrofolate is bound at residue K454.

This sequence belongs to the TRAFAC class TrmE-Era-EngA-EngB-Septin-like GTPase superfamily. TrmE GTPase family. As to quaternary structure, homodimer. Heterotetramer of two MnmE and two MnmG subunits. The cofactor is K(+).

Its subcellular location is the cytoplasm. Exhibits a very high intrinsic GTPase hydrolysis rate. Involved in the addition of a carboxymethylaminomethyl (cmnm) group at the wobble position (U34) of certain tRNAs, forming tRNA-cmnm(5)s(2)U34. This is tRNA modification GTPase MnmE from Salmonella typhimurium (strain LT2 / SGSC1412 / ATCC 700720).